The following is a 638-amino-acid chain: Protein disulfide-isomerase A4 (638 aa).

A signal peptide spans 1–20 (MKLRKAWLLVLLLALTQLLA). Thioredoxin domains follow at residues 21–162 (AASA…EVSQ) and 162–294 (QPDW…EFLK). The tract at residues 24 to 50 (AGDAHEDTSDTENATEEEEEEDDDDLE) is disordered. Residues 32 to 50 (SDTENATEEEEEEDDDDLE) are compositionally biased toward acidic residues. N36 carries an N-linked (GlcNAc...) asparagine glycan. A CXXC motif is present at residues 84 to 87 (CGHC). Disulfide bonds link C84/C87 and C199/C202. K359 carries the post-translational modification N6-acetyllysine. A Thioredoxin 3 domain is found at 498–629 (FKKGKLKPVI…LSKFIDEHAT (132 aa)). The CXXC signature appears at 548–551 (CGHC). A disulfide bridge connects residues C548 and C551. A Prevents secretion from ER motif is present at residues 635–638 (KEEL).

Belongs to the protein disulfide isomerase family. In terms of assembly, part of a large chaperone multiprotein complex comprising DNAJB11, HSP90B1, HSPA5, HYOU, PDIA2, PDIA4, PDIA6, PPIB, SDF2L1, UGGT1 and very small amounts of ERP29, but not, or at very low levels, CALR nor CANX. Component of a complex containing at least CRELD2, MANF, MATN3 and PDIA4.

The protein resides in the endoplasmic reticulum lumen. The protein localises to the melanosome. It carries out the reaction Catalyzes the rearrangement of -S-S- bonds in proteins.. This chain is Protein disulfide-isomerase A4 (Pdia4), found in Mus musculus (Mouse).